A 359-amino-acid chain; its full sequence is Dihydroorotate dehydrogenase (quinone) (359 aa).

FMN contacts are provided by residues 65–69 (AGLDK) and Thr-89. Substrate is bound at residue Lys-69. 114–118 (NRLGF) lines the substrate pocket. FMN contacts are provided by Asn-149 and Asn-182. Asn-182 is a binding site for substrate. The active-site Nucleophile is the Ser-185. Asn-187 is a substrate binding site. FMN-binding residues include Lys-233 and Thr-261. Substrate is bound at residue 262 to 263 (NT). Residues Gly-284, Gly-313, and 334-335 (YT) each bind FMN.

This sequence belongs to the dihydroorotate dehydrogenase family. Type 2 subfamily. Monomer. Requires FMN as cofactor.

It is found in the cell membrane. It catalyses the reaction (S)-dihydroorotate + a quinone = orotate + a quinol. It functions in the pathway pyrimidine metabolism; UMP biosynthesis via de novo pathway; orotate from (S)-dihydroorotate (quinone route): step 1/1. Catalyzes the conversion of dihydroorotate to orotate with quinone as electron acceptor. The sequence is that of Dihydroorotate dehydrogenase (quinone) from Paracidovorax citrulli (strain AAC00-1) (Acidovorax citrulli).